A 274-amino-acid chain; its full sequence is Malonyl-[acyl-carrier protein] O-methyltransferase (274 aa).

It belongs to the methyltransferase superfamily.

The enzyme catalyses malonyl-[ACP] + S-adenosyl-L-methionine = malonyl-[ACP] methyl ester + S-adenosyl-L-homocysteine. It functions in the pathway cofactor biosynthesis; biotin biosynthesis. In terms of biological role, converts the free carboxyl group of a malonyl-thioester to its methyl ester by transfer of a methyl group from S-adenosyl-L-methionine (SAM). It allows to synthesize pimeloyl-ACP via the fatty acid synthetic pathway. This chain is Malonyl-[acyl-carrier protein] O-methyltransferase, found in Priestia megaterium (strain DSM 319 / IMG 1521) (Bacillus megaterium).